A 107-amino-acid polypeptide reads, in one-letter code: uncharacterized protein (107 aa).

Helical transmembrane passes span 5–25 (WTII…VINV) and 42–62 (ILVI…VGIF). Basic and acidic residues predominate over residues 82–92 (IHKQEDTHLAD). Residues 82–107 (IHKQEDTHLADQTDTQDASAMIEKKD) are disordered.

Its subcellular location is the cell membrane. This is an uncharacterized protein from Bacillus subtilis (strain 168).